The primary structure comprises 431 residues: Histidinol dehydrogenase (431 aa).

3 residues coordinate NAD(+): tyrosine 127, glutamine 189, and asparagine 212. The substrate site is built by serine 237, glutamine 259, and histidine 262. Residues glutamine 259 and histidine 262 each contribute to the Zn(2+) site. Residues glutamate 326 and histidine 327 each act as proton acceptor in the active site. Histidine 327, aspartate 360, glutamate 414, and histidine 419 together coordinate substrate. Aspartate 360 serves as a coordination point for Zn(2+). Residue histidine 419 participates in Zn(2+) binding.

The protein belongs to the histidinol dehydrogenase family. Requires Zn(2+) as cofactor.

The catalysed reaction is L-histidinol + 2 NAD(+) + H2O = L-histidine + 2 NADH + 3 H(+). Its pathway is amino-acid biosynthesis; L-histidine biosynthesis; L-histidine from 5-phospho-alpha-D-ribose 1-diphosphate: step 9/9. Functionally, catalyzes the sequential NAD-dependent oxidations of L-histidinol to L-histidinaldehyde and then to L-histidine. This Xanthomonas axonopodis pv. citri (strain 306) protein is Histidinol dehydrogenase.